A 293-amino-acid chain; its full sequence is uncharacterized protein (293 aa).

The protein belongs to the TolB family.

This is an uncharacterized protein from Agrobacterium fabrum (strain C58 / ATCC 33970) (Agrobacterium tumefaciens (strain C58)).